A 221-amino-acid chain; its full sequence is Probable septum site-determining protein MinC (221 aa).

Belongs to the MinC family. In terms of assembly, interacts with MinD and FtsZ.

Functionally, cell division inhibitor that blocks the formation of polar Z ring septums. Rapidly oscillates between the poles of the cell to destabilize FtsZ filaments that have formed before they mature into polar Z rings. Prevents FtsZ polymerization. This is Probable septum site-determining protein MinC from Aliivibrio fischeri (strain MJ11) (Vibrio fischeri).